An 893-amino-acid chain; its full sequence is Translation initiation factor IF-2 (893 aa).

2 disordered regions span residues 51-203 (KEHG…AEAE) and 216-299 (EENE…TSMQ). 3 stretches are compositionally biased toward basic and acidic residues: residues 102–203 (ALEE…AEAE), 216–238 (EENEARWKEEEQKKSAAEKDADY), and 245–261 (HAREAEDAADRKEEQQP). The tr-type G domain occupies 392–561 (GRAPVVTIMG…LLQSEVLELT (170 aa)). The tract at residues 401–408 (GHVDHGKT) is G1. 401–408 (GHVDHGKT) contributes to the GTP binding site. The interval 426-430 (GITQH) is G2. Residues 447–450 (DTPG) are G3. Residues 447–451 (DTPGH) and 501–504 (NKID) contribute to the GTP site. The interval 501–504 (NKID) is G4. The segment at 537-539 (SAK) is G5.

The protein belongs to the TRAFAC class translation factor GTPase superfamily. Classic translation factor GTPase family. IF-2 subfamily.

The protein localises to the cytoplasm. Functionally, one of the essential components for the initiation of protein synthesis. Protects formylmethionyl-tRNA from spontaneous hydrolysis and promotes its binding to the 30S ribosomal subunits. Also involved in the hydrolysis of GTP during the formation of the 70S ribosomal complex. This is Translation initiation factor IF-2 from Aliivibrio fischeri (strain ATCC 700601 / ES114) (Vibrio fischeri).